The following is a 305-amino-acid chain: MIKQRTLKRIVQATGVGLHTGKKVTLTLRPASANTGVIYRRTDLNPPVDFPADAKSVRDTMLCTCLVNEHDVRISTVEHLNAALAGLGIDNIVIEVDAPEIPIMDGSAAPFVYLLLDAGIEELNCAKKFVRIKETVRVEDGDKWAEFKPFNGFSLDFTIDFNHPAIDASTQRYAMNFSADAFMRQISRARTFGFMRDIEYLQSRGLCLGGSFDCAIVVDDYRVLNEDGLRFEDEFVRHKMLDAIGDLFMCGHNIIGAFTAFKSGHALNNKLLQAVLAKQEAWEYVTFEDEAELPLAFKAPSTVLA.

Zn(2+) contacts are provided by H79, H238, and D242. H265 (proton donor) is an active-site residue.

This sequence belongs to the LpxC family. Zn(2+) is required as a cofactor.

It catalyses the reaction a UDP-3-O-[(3R)-3-hydroxyacyl]-N-acetyl-alpha-D-glucosamine + H2O = a UDP-3-O-[(3R)-3-hydroxyacyl]-alpha-D-glucosamine + acetate. The protein operates within glycolipid biosynthesis; lipid IV(A) biosynthesis; lipid IV(A) from (3R)-3-hydroxytetradecanoyl-[acyl-carrier-protein] and UDP-N-acetyl-alpha-D-glucosamine: step 2/6. Its function is as follows. Catalyzes the hydrolysis of UDP-3-O-myristoyl-N-acetylglucosamine to form UDP-3-O-myristoylglucosamine and acetate, the committed step in lipid A biosynthesis. The polypeptide is UDP-3-O-acyl-N-acetylglucosamine deacetylase (Enterobacter sp. (strain 638)).